Reading from the N-terminus, the 244-residue chain is Zinc import ATP-binding protein ZnuC 2 (244 aa).

Positions 3-218 (IGCASLTIQL…PEYLALFGID (216 aa)) constitute an ABC transporter domain. Residue 35 to 42 (GPNGSGKT) coordinates ATP.

It belongs to the ABC transporter superfamily. Zinc importer (TC 3.A.1.15.5) family. As to quaternary structure, the complex is composed of two ATP-binding proteins (ZnuC), two transmembrane proteins (ZnuB) and a solute-binding protein (ZnuA).

Its subcellular location is the cell inner membrane. It catalyses the reaction Zn(2+)(out) + ATP(in) + H2O(in) = Zn(2+)(in) + ADP(in) + phosphate(in) + H(+)(in). In terms of biological role, part of the ABC transporter complex ZnuABC involved in zinc import. Responsible for energy coupling to the transport system. This is Zinc import ATP-binding protein ZnuC 2 from Hahella chejuensis (strain KCTC 2396).